A 121-amino-acid chain; its full sequence is Small ribosomal subunit protein uS13 (121 aa).

The segment at 96 to 121 (PVRGQNTKNNARTRKGKAVAIAGKKK) is disordered. Positions 106-121 (ARTRKGKAVAIAGKKK) are enriched in basic residues.

This sequence belongs to the universal ribosomal protein uS13 family. In terms of assembly, part of the 30S ribosomal subunit. Forms a loose heterodimer with protein S19. Forms two bridges to the 50S subunit in the 70S ribosome.

Located at the top of the head of the 30S subunit, it contacts several helices of the 16S rRNA. In the 70S ribosome it contacts the 23S rRNA (bridge B1a) and protein L5 of the 50S subunit (bridge B1b), connecting the 2 subunits; these bridges are implicated in subunit movement. Contacts the tRNAs in the A and P-sites. The sequence is that of Small ribosomal subunit protein uS13 from Streptococcus agalactiae serotype Ia (strain ATCC 27591 / A909 / CDC SS700).